The chain runs to 149 residues: UPF0260 protein Avin_32930 (149 aa).

It belongs to the UPF0260 family.

This is UPF0260 protein Avin_32930 from Azotobacter vinelandii (strain DJ / ATCC BAA-1303).